A 238-amino-acid polypeptide reads, in one-letter code: Dolichyldiphosphatase 1 (238 aa).

The next 4 helical transmembrane spans lie at 33–53 (LAYL…LIIF), 100–120 (PSSH…FLYL), 130–150 (FLDL…AFLV), and 162–182 (WSQV…WFIF).

It belongs to the dolichyldiphosphatase family.

The protein localises to the endoplasmic reticulum membrane. It catalyses the reaction a di-trans,poly-cis-dolichyl diphosphate + H2O = a di-trans,poly-cis-dolichyl phosphate + phosphate + H(+). Its pathway is protein modification; protein glycosylation. In terms of biological role, required for efficient N-glycosylation. Necessary for maintaining optimal levels of dolichol-linked oligosaccharides. Hydrolyzes dolichyl pyrophosphate at a very high rate and dolichyl monophosphate at a much lower rate. Does not act on phosphatidate. This chain is Dolichyldiphosphatase 1 (DOLPP1), found in Callithrix jacchus (White-tufted-ear marmoset).